A 284-amino-acid polypeptide reads, in one-letter code: Bifunctional protein FolD (284 aa).

NADP(+) is bound by residues 165–167 (GRS), serine 190, and isoleucine 231.

This sequence belongs to the tetrahydrofolate dehydrogenase/cyclohydrolase family. As to quaternary structure, homodimer.

The enzyme catalyses (6R)-5,10-methylene-5,6,7,8-tetrahydrofolate + NADP(+) = (6R)-5,10-methenyltetrahydrofolate + NADPH. It carries out the reaction (6R)-5,10-methenyltetrahydrofolate + H2O = (6R)-10-formyltetrahydrofolate + H(+). It functions in the pathway one-carbon metabolism; tetrahydrofolate interconversion. In terms of biological role, catalyzes the oxidation of 5,10-methylenetetrahydrofolate to 5,10-methenyltetrahydrofolate and then the hydrolysis of 5,10-methenyltetrahydrofolate to 10-formyltetrahydrofolate. In Streptococcus thermophilus (strain ATCC BAA-250 / LMG 18311), this protein is Bifunctional protein FolD.